Consider the following 351-residue polypeptide: Large ribosomal subunit protein uL3 (351 aa).

2 disordered regions span residues 1–31 and 246–271; these read MGHRKLASPRRGSAGLRPRKRSSELLPTPRT and KGSRKIGTRGPSLGTPSYTPQPGQLG.

This sequence belongs to the universal ribosomal protein uL3 family. In terms of assembly, part of the 50S ribosomal subunit. Forms a cluster with proteins L14 and L24e.

Its function is as follows. One of the primary rRNA binding proteins, it binds directly near the 3'-end of the 23S rRNA, where it nucleates assembly of the 50S subunit. In Saccharolobus islandicus (strain M.14.25 / Kamchatka #1) (Sulfolobus islandicus), this protein is Large ribosomal subunit protein uL3.